The sequence spans 465 residues: MKVYNTLTRTKEEFVPLEEGKVKMYVCGPTVYNYIHIGNARPFIIFDTLRRYLEYRGYDVTYVQNFTDVDDKIINRSHEEGISPEEVAAKYIKEYFVDCDGLGIKRATVHPQVTDNIQQIIEFIKELEDKGYAYAVNGDVYFDTNKFEGYGKLSGQKQEDLEAGARIEVNDQKRHPMDFVLWKAKKEGEPGWDSPWGEGRPGWHIECSVMSKRYLGETIDIHAGGQDLTFPHHENEIAQSEARSGKTFSKYWMHNGYININDEKMSKSKGNFFTVRDISKLYDLEIVRFFMLSAHYRNPVNFSDEMLNQAKAGLERLYNTKEKLEFTLSNLVESPLTEKEVELVKELDDFRQKFIDAMDDDVNTADAVSVIFELAKLINSNVDENSSLEFAKKCLDEFNELTGVLNIVNKKKDTVLDKDIEELIQKRTDAKKNKEFQLADDIRQQLLDMGIVLEDTRQGVKWKRI.

Residue cysteine 27 coordinates Zn(2+). Residues 29–39 carry the 'HIGH' region motif; that stretch reads PTVYNYIHIGN. The Zn(2+) site is built by cysteine 207, histidine 232, and glutamate 236. The short motif at 264-268 is the 'KMSKS' region element; the sequence is KMSKS. Lysine 267 contributes to the ATP binding site.

It belongs to the class-I aminoacyl-tRNA synthetase family. As to quaternary structure, monomer. Zn(2+) is required as a cofactor.

The protein resides in the cytoplasm. The catalysed reaction is tRNA(Cys) + L-cysteine + ATP = L-cysteinyl-tRNA(Cys) + AMP + diphosphate. The protein is Cysteine--tRNA ligase of Clostridioides difficile (strain 630) (Peptoclostridium difficile).